Consider the following 137-residue polypeptide: Large ribosomal subunit protein uL14 (137 aa).

This sequence belongs to the universal ribosomal protein uL14 family. As to quaternary structure, part of the 50S ribosomal subunit. Forms a cluster with proteins L3 and L24e, part of which may contact the 16S rRNA in 2 intersubunit bridges.

Binds to 23S rRNA. Forms part of two intersubunit bridges in the 70S ribosome. This is Large ribosomal subunit protein uL14 from Ignicoccus hospitalis (strain KIN4/I / DSM 18386 / JCM 14125).